The sequence spans 378 residues: Probable pectin lyase A (378 aa).

The N-terminal stretch at 1-18 (MKYQGLLAIAGCIASASA) is a signal peptide. 2 cysteine pairs are disulfide-bonded: Cys81/Cys100 and Cys90/Cys224. A glycan (N-linked (GlcNAc...) asparagine) is linked at Asn127. Residue Arg254 is part of the active site. A disulfide bridge connects residues Cys321 and Cys329.

This sequence belongs to the polysaccharide lyase 1 family.

It is found in the secreted. The enzyme catalyses Eliminative cleavage of (1-&gt;4)-alpha-D-galacturonan methyl ester to give oligosaccharides with 4-deoxy-6-O-methyl-alpha-D-galact-4-enuronosyl groups at their non-reducing ends.. Pectinolytic enzymes consist of four classes of enzymes: pectin lyase, polygalacturonase, pectin methylesterase and rhamnogalacturonase. Among pectinolytic enzymes, pectin lyase is the most important in depolymerization of pectin, since it cleaves internal glycosidic bonds of highly methylated pectins. This chain is Probable pectin lyase A (pelA), found in Neosartorya fischeri (strain ATCC 1020 / DSM 3700 / CBS 544.65 / FGSC A1164 / JCM 1740 / NRRL 181 / WB 181) (Aspergillus fischerianus).